The primary structure comprises 299 residues: GTPase Era (299 aa).

The Era-type G domain maps to 5–172 (KSGFVSIIGR…IDVLKTYLPE (168 aa)). Residues 13-20 (GRPNVGKS) form a G1 region. A GTP-binding site is contributed by 13 to 20 (GRPNVGKS). Residues 39-43 (QTTRN) are G2. The tract at residues 60–63 (DTPG) is G3. Residues 60-64 (DTPGI) and 122-125 (NKID) each bind GTP. The G4 stretch occupies residues 122–125 (NKID). Positions 151–153 (ISA) are G5. A KH type-2 domain is found at 203–280 (TSEEIPHAIG…YLELWVKVQR (78 aa)).

It belongs to the TRAFAC class TrmE-Era-EngA-EngB-Septin-like GTPase superfamily. Era GTPase family. In terms of assembly, monomer.

The protein localises to the cytoplasm. It is found in the cell membrane. An essential GTPase that binds both GDP and GTP, with rapid nucleotide exchange. Plays a role in 16S rRNA processing and 30S ribosomal subunit biogenesis and possibly also in cell cycle regulation and energy metabolism. This chain is GTPase Era, found in Staphylococcus aureus (strain bovine RF122 / ET3-1).